Reading from the N-terminus, the 318-residue chain is CMRF35-like molecule 8 (318 aa).

The first 27 residues, 1 to 27, serve as a signal peptide directing secretion; it reads MTQLASAVWLPTLLLLLLLFWLPGCVP. An Ig-like V-type domain is found at 28–129; the sequence is LHGPSTMSGS…FDGSLGFDKY (102 aa). Topologically, residues 28–185 are extracellular; it reads LHGPSTMSGS…HDYSQGLRLP (158 aa). Cys46 and Cys113 are joined by a disulfide. The N-linked (GlcNAc...) asparagine glycan is linked to Asn93. The span at 139–148 shows a compositional bias: low complexity; that stretch reads SEDPVSSPGP. The tract at residues 139–174 is disordered; that stretch reads SEDPVSSPGPTLETPVVSTSLPTKGPALGSNTEGHR. A helical membrane pass occupies residues 186 to 206; it reads ALLSVLALLLFLLVGTSLLAW. Residues 207-318 are Cytoplasmic-facing; that stretch reads RMFQKRLVKA…PRKGLSDLYL (112 aa). Positions 284 to 296 are enriched in polar residues; the sequence is QDSHANGDSLHQP. The disordered stretch occupies residues 284–318; sequence QDSHANGDSLHQPQDQKAEYSEIQKPRKGLSDLYL. Residues 297 to 308 are compositionally biased toward basic and acidic residues; the sequence is QDQKAEYSEIQK. At Tyr303 the chain carries Phosphotyrosine.

The protein belongs to the CD300 family. In terms of assembly, upon tyrosine-phosphorylation, interacts with PTN6/SHP-1 and PTPN11/SHP-2 and INPP5D. In terms of processing, phosphorylated on tyrosine. N-glycosylated. As to expression, present on the surface of the majority of myeloid cells and a subset of B-cells. Present on the surface of NK cells after IL-12 stimulation.

Its subcellular location is the cell membrane. Functionally, inhibitory receptor which may contribute to the down-regulation of cytolytic activity in natural killer (NK) cells, and to the down-regulation of mast cell degranulation. Negatively regulates the Toll-like receptor (TLR) signaling mediated by MYD88 but not TRIF through activation of PTPN6. The sequence is that of CMRF35-like molecule 8 (Cd300a) from Mus musculus (Mouse).